Consider the following 429-residue polypeptide: UPF0597 protein GSU1527 (429 aa).

Belongs to the UPF0597 family.

The sequence is that of UPF0597 protein GSU1527 from Geobacter sulfurreducens (strain ATCC 51573 / DSM 12127 / PCA).